The following is a 502-amino-acid chain: Histidine--tRNA ligase (502 aa).

It belongs to the class-II aminoacyl-tRNA synthetase family. In terms of assembly, homodimer.

Its subcellular location is the cytoplasm. The catalysed reaction is tRNA(His) + L-histidine + ATP = L-histidyl-tRNA(His) + AMP + diphosphate + H(+). In Brucella suis biovar 1 (strain 1330), this protein is Histidine--tRNA ligase (hisS).